The chain runs to 765 residues: Probable serine/threonine-protein kinase DDB_G0271402 (765 aa).

The Protein kinase domain occupies 35–328 (LEFGQEIGKG…KEITERLKSL (294 aa)). ATP contacts are provided by residues 41–49 (IGKGAYGKI) and Lys-62. Asp-192 functions as the Proton acceptor in the catalytic mechanism. Disordered regions lie at residues 371-393 (IVHN…NNSN), 443-477 (SMGD…KIIN), 491-527 (SSDL…NNNS), 545-620 (PIQI…QQYQ), 654-684 (PLNI…HHHL), 699-738 (IISS…PTNI), and 746-765 (ASNS…TVQS). Residues 446–458 (DESDLDSDDEDDS) show a composition bias toward acidic residues. Composition is skewed to low complexity over residues 459–470 (YTSSASSSRCNS), 499–527 (NGNN…NNNS), 562–605 (PPTS…PKSN), 662–678 (NNNN…GNVN), and 699–720 (IISS…SLTS).

This sequence belongs to the protein kinase superfamily. TKL Ser/Thr protein kinase family.

The catalysed reaction is L-seryl-[protein] + ATP = O-phospho-L-seryl-[protein] + ADP + H(+). It catalyses the reaction L-threonyl-[protein] + ATP = O-phospho-L-threonyl-[protein] + ADP + H(+). The chain is Probable serine/threonine-protein kinase DDB_G0271402 from Dictyostelium discoideum (Social amoeba).